The primary structure comprises 115 residues: NADH-ubiquinone oxidoreductase chain 3 (115 aa).

3 helical membrane passes run 3–23 (LMAT…IAFW), 55–75 (FFLV…LLPL), and 86–106 (LTLL…AYEW).

It belongs to the complex I subunit 3 family. In terms of assembly, core subunit of respiratory chain NADH dehydrogenase (Complex I) which is composed of 45 different subunits. Interacts with TMEM186. Interacts with TMEM242.

Its subcellular location is the mitochondrion inner membrane. The catalysed reaction is a ubiquinone + NADH + 5 H(+)(in) = a ubiquinol + NAD(+) + 4 H(+)(out). In terms of biological role, core subunit of the mitochondrial membrane respiratory chain NADH dehydrogenase (Complex I) which catalyzes electron transfer from NADH through the respiratory chain, using ubiquinone as an electron acceptor. Essential for the catalytic activity of complex I. The chain is NADH-ubiquinone oxidoreductase chain 3 from Mammuthus primigenius (Siberian woolly mammoth).